We begin with the raw amino-acid sequence, 423 residues long: Methylenetetrahydrofolate--tRNA-(uracil-5-)-methyltransferase TrmFO 2 (423 aa).

Residue 8 to 13 (GAGLSG) coordinates FAD.

This sequence belongs to the MnmG family. TrmFO subfamily. The cofactor is FAD.

It localises to the cytoplasm. It catalyses the reaction uridine(54) in tRNA + (6R)-5,10-methylene-5,6,7,8-tetrahydrofolate + NADH + H(+) = 5-methyluridine(54) in tRNA + (6S)-5,6,7,8-tetrahydrofolate + NAD(+). It carries out the reaction uridine(54) in tRNA + (6R)-5,10-methylene-5,6,7,8-tetrahydrofolate + NADPH + H(+) = 5-methyluridine(54) in tRNA + (6S)-5,6,7,8-tetrahydrofolate + NADP(+). Functionally, catalyzes the folate-dependent formation of 5-methyl-uridine at position 54 (M-5-U54) in all tRNAs. This is Methylenetetrahydrofolate--tRNA-(uracil-5-)-methyltransferase TrmFO 2 from Mycoplasma capricolum subsp. capricolum (strain California kid / ATCC 27343 / NCTC 10154).